The chain runs to 562 residues: UPF0649 protein C1442.02 (562 aa).

Ser285 and Ser286 each carry phosphoserine. The segment at 288-308 (DEEIAKNADVPAEVDNNSTKA) is disordered.

The protein belongs to the UPF0649 family.

The protein localises to the cytoplasm. The protein resides in the nucleus. The chain is UPF0649 protein C1442.02 from Schizosaccharomyces pombe (strain 972 / ATCC 24843) (Fission yeast).